Reading from the N-terminus, the 397-residue chain is Mannosylglycerate synthase (397 aa).

GDP-alpha-D-mannose is bound by residues 7–11, Ile-35, Gln-66, Lys-76, Asp-100, and 100–101; these read PFKHE and DA. Asp-102 contacts a divalent metal cation. (R)-glycerate-binding positions include Arg-131 and 136–139; that span reads AMIT. Residues Leu-163 and Asp-192 each contribute to the GDP-alpha-D-mannose site. His-217 lines the a divalent metal cation pocket. GDP-alpha-D-mannose-binding residues include Arg-218 and Tyr-220.

This sequence belongs to the glycosyltransferase 78 family. As to quaternary structure, homotetramer. Dimer of dimers. Mg(2+) serves as cofactor. It depends on Ca(2+) as a cofactor. The cofactor is Mn(2+). Requires Ni(2+) as cofactor. Co(2+) is required as a cofactor.

The catalysed reaction is (R)-glycerate + GDP-alpha-D-mannose = (2R)-2-O-(alpha-D-mannosyl)-glycerate + GDP + H(+). Inhibited by GDP. Its function is as follows. Involved in the biosynthesis of the stress protectant 2-O-alpha-D-mannosyl glycerate (MG) which is produced in response to growth at supraoptimal temperature and salinity, and protects several enzymes against inactivation by temperature, freeze-drying and osmotic stress. Catalyzes the condensation of alpha-GDP-D-mannose (GDP-Man) with D-glycerate to produce alpha-mannosyl-D-glycerate. It is specific for GDP-Man, but it can also use alpha-GDP-D-glucose (GDP-Glc), beta-GDP-D-fructose, alpha-UDP-D-mannose and alpha-UDP-D-glucose as sugar donors. It is specific for D-glycerate, but it can also use D-lactate and glycolate as sugar acceptors. This reaction occurs with a net retention of anomeric configuration; the newly formed glycosidic linkage has the same alpha configuration as the sugar donor. This is Mannosylglycerate synthase (mgs) from Rhodothermus marinus (Rhodothermus obamensis).